The primary structure comprises 408 residues: Phosphatidylinositol transfer protein CSR1 (408 aa).

Ser2 bears the N-acetylserine mark. Position 2 is a phosphoserine (Ser2). Residues 157 to 317 (ETGVIKNLEL…YLGGENDNDL (161 aa)) enclose the CRAL-TRIO domain.

The protein belongs to the PITP family. Forms a complex with 2 TSA2 subunits. Binds phosphatidylinositol (PtdIns).

It localises to the cytoplasm. The protein localises to the microsome. It is found in the endosome. The enzyme catalyses a 1,2-diacyl-sn-glycero-3-phospho-(1D-myo-inositol)(in) = a 1,2-diacyl-sn-glycero-3-phospho-(1D-myo-inositol)(out). Its function is as follows. Non-classical phosphatidylinositol (PtdIns) transfer protein (PITP), which exhibits PtdIns-binding/transfer activity in the absence of detectable PtdCho-binding/transfer activity. Activates SPO14/PLD1 (phospholipase D1) by stimulating phosphoinositide synthesis via the STT4 PtdIns 4-kinase. Modulates ArfGAP function through effects on SPO14 activity. Inhibits phosphatidylcholine degradation by PLB1 (phospholipase B1). May also regulate post-Golgi membrane-trafficking events and have a role resistance to oxidative stress. Inhibits fatty acid synthase activity in response to heme depletion and oleic acid starvation, preventing saturated fatty acid (SFA) accumulation. The sequence is that of Phosphatidylinositol transfer protein CSR1 (CSR1) from Saccharomyces cerevisiae (strain ATCC 204508 / S288c) (Baker's yeast).